The following is a 1226-amino-acid chain: Double-stranded RNA-specific adenosine deaminase (1226 aa).

R26 is modified (asymmetric dimethylarginine). Residues 133–199 (LSIYQDQEQR…GTPPLWKIAV (67 aa)) form the Z-binding 1 domain. The interval 133–202 (LSIYQDQEQR…PLWKIAVSTQ (70 aa)) is interaction with Z-DNA. Disordered regions lie at residues 208–238 (SGVVRPDGHSQGAPNSDPSLEPEDRNSTSVS) and 258–286 (GVVRPDSHSQGSPNSDPGLEPEDSNSTSA). S285 is modified (phosphoserine). The Z-binding 2 domain maps to 293–357 (FLDMAEIKEK…TTPPIWHLTD (65 aa)). Residues K384 and K408 each participate in a glycyl lysine isopeptide (Lys-Gly) (interchain with G-Cter in SUMO2) cross-link. Residue K418 forms a Glycyl lysine isopeptide (Lys-Gly) (interchain with G-Cter in SUMO); alternate linkage. K418 participates in a covalent cross-link: Glycyl lysine isopeptide (Lys-Gly) (interchain with G-Cter in SUMO1); alternate. K418 participates in a covalent cross-link: Glycyl lysine isopeptide (Lys-Gly) (interchain with G-Cter in SUMO2); alternate. Position 481 is a phosphoserine (S481). Positions 503–571 (NPISGLLEYA…AMKAMTILLE (69 aa)) constitute a DRBM 1 domain. Basic and acidic residues predominate over residues 574 to 597 (KAKDSGKSEESSHYSTEKESEKTA). Positions 574–610 (KAKDSGKSEESSHYSTEKESEKTAESQTPTPSATSFF) are disordered. A Glycyl lysine isopeptide (Lys-Gly) (interchain with G-Cter in SUMO2) cross-link involves residue K580. A compositionally biased stretch (polar residues) spans 600–610 (QTPTPSATSFF). Phosphothreonine occurs at positions 601 and 603. A phosphoserine mark is found at S614, S629, and S636. The DRBM 2 domain maps to 614 to 682 (SPVTTLLECM…AEEAMKALHG (69 aa)). Positions 716–725 (IGELVRYLNT) are N-terminal extension of DRBM 3 and constituent of a bi-partite nuclear localization signal. A DRBM 3 domain is found at 726 to 794 (NPVGGLLEYA…ADAALRVLIG (69 aa)). Residues 795–801 (ENEKAER) are C-terminal extension of DRBM 3 and constituent of a bi-partite nuclear localization signal. The residue at position 808 (T808) is a Phosphothreonine. Phosphoserine is present on residues S814, S823, and S825. K875 participates in a covalent cross-link: Glycyl lysine isopeptide (Lys-Gly) (interchain with G-Cter in SUMO2). The 336-residue stretch at 886 to 1221 (SLGTGNRCVK…ISKPQEEKNF (336 aa)) folds into the A to I editase domain. A Zn(2+)-binding site is contributed by H910. The active-site Proton donor is the E912. Zn(2+) is bound by residues C966 and C1036.

As to quaternary structure, homodimer. Homodimerization is essential for its catalytic activity. Isoform 5 can form heterodimers with ADARB1/ADAR2. Isoform 1 interacts with ILF2/NF45 and ILF3/NF90. Binding to ILF3/NF90 up-regulates ILF3-mediated gene expression. Isoform 1 and isoform 5 (via DRBM 3 domain) interact with TNPO1. Isoform 5 (via DRBM domains) interacts with XPO5. Isoform 1 and isoform 5 can interact with EIF2AK2/PKR and UPF1. Post-translationally, sumoylation reduces RNA-editing activity. In terms of tissue distribution, ubiquitously expressed, highest levels were found in brain and lung. Isoform 5 is expressed at higher levels in astrocytomas as compared to normal brain tissue and expression increases strikingly with the severity of the tumor, being higher in the most aggressive tumors.

It is found in the cytoplasm. The protein resides in the nucleus. It localises to the nucleolus. It catalyses the reaction adenosine in double-stranded RNA + H2O + H(+) = inosine in double-stranded RNA + NH4(+). Catalyzes the hydrolytic deamination of adenosine to inosine in double-stranded RNA (dsRNA) referred to as A-to-I RNA editing. This may affect gene expression and function in a number of ways that include mRNA translation by changing codons and hence the amino acid sequence of proteins since the translational machinery read the inosine as a guanosine; pre-mRNA splicing by altering splice site recognition sequences; RNA stability by changing sequences involved in nuclease recognition; genetic stability in the case of RNA virus genomes by changing sequences during viral RNA replication; and RNA structure-dependent activities such as microRNA production or targeting or protein-RNA interactions. Can edit both viral and cellular RNAs and can edit RNAs at multiple sites (hyper-editing) or at specific sites (site-specific editing). Its cellular RNA substrates include: bladder cancer-associated protein (BLCAP), neurotransmitter receptors for glutamate (GRIA2) and serotonin (HTR2C) and GABA receptor (GABRA3). Site-specific RNA editing of transcripts encoding these proteins results in amino acid substitutions which consequently alters their functional activities. Exhibits low-level editing at the GRIA2 Q/R site, but edits efficiently at the R/G site and HOTSPOT1. Its viral RNA substrates include: hepatitis C virus (HCV), vesicular stomatitis virus (VSV), measles virus (MV), hepatitis delta virus (HDV), and human immunodeficiency virus type 1 (HIV-1). Exhibits either a proviral (HDV, MV, VSV and HIV-1) or an antiviral effect (HCV) and this can be editing-dependent (HDV and HCV), editing-independent (VSV and MV) or both (HIV-1). Impairs HCV replication via RNA editing at multiple sites. Enhances the replication of MV, VSV and HIV-1 through an editing-independent mechanism via suppression of EIF2AK2/PKR activation and function. Stimulates both the release and infectivity of HIV-1 viral particles by an editing-dependent mechanism where it associates with viral RNAs and edits adenosines in the 5'UTR and the Rev and Tat coding sequence. Can enhance viral replication of HDV via A-to-I editing at a site designated as amber/W, thereby changing an UAG amber stop codon to an UIG tryptophan (W) codon that permits synthesis of the large delta antigen (L-HDAg) which has a key role in the assembly of viral particles. However, high levels of ADAR1 inhibit HDV replication. This chain is Double-stranded RNA-specific adenosine deaminase (ADAR), found in Homo sapiens (Human).